We begin with the raw amino-acid sequence, 476 residues long: Sulfate adenylyltransferase subunit 1 (476 aa).

The 220-residue stretch at 24-243 folds into the tr-type G domain; that stretch reads KSLLRFLTCG…VDVEKEKEAG (220 aa). The segment at 33-40 is G1; that stretch reads GSVDDGKS. Residue 33 to 40 participates in GTP binding; sequence GSVDDGKS. Positions 91-95 are G2; that stretch reads GITID. A G3 region spans residues 112–115; it reads DTPG. GTP is bound by residues 112 to 116 and 167 to 170; these read DTPGH and NKMD. Positions 167-170 are G4; that stretch reads NKMD. Residues 205–207 are G5; the sequence is SAL.

Belongs to the TRAFAC class translation factor GTPase superfamily. Classic translation factor GTPase family. CysN/NodQ subfamily. As to quaternary structure, heterodimer composed of CysD, the smaller subunit, and CysN.

The enzyme catalyses sulfate + ATP + H(+) = adenosine 5'-phosphosulfate + diphosphate. Its pathway is sulfur metabolism; hydrogen sulfide biosynthesis; sulfite from sulfate: step 1/3. Functionally, with CysD forms the ATP sulfurylase (ATPS) that catalyzes the adenylation of sulfate producing adenosine 5'-phosphosulfate (APS) and diphosphate, the first enzymatic step in sulfur assimilation pathway. APS synthesis involves the formation of a high-energy phosphoric-sulfuric acid anhydride bond driven by GTP hydrolysis by CysN coupled to ATP hydrolysis by CysD. The chain is Sulfate adenylyltransferase subunit 1 from Vibrio vulnificus (strain YJ016).